Consider the following 464-residue polypeptide: 3-isopropylmalate dehydratase large subunit (464 aa).

Residues Cys337, Cys397, and Cys400 each coordinate [4Fe-4S] cluster.

Belongs to the aconitase/IPM isomerase family. LeuC type 1 subfamily. In terms of assembly, heterodimer of LeuC and LeuD. The cofactor is [4Fe-4S] cluster.

The catalysed reaction is (2R,3S)-3-isopropylmalate = (2S)-2-isopropylmalate. It functions in the pathway amino-acid biosynthesis; L-leucine biosynthesis; L-leucine from 3-methyl-2-oxobutanoate: step 2/4. In terms of biological role, catalyzes the isomerization between 2-isopropylmalate and 3-isopropylmalate, via the formation of 2-isopropylmaleate. The chain is 3-isopropylmalate dehydratase large subunit from Bacillus cereus (strain ATCC 14579 / DSM 31 / CCUG 7414 / JCM 2152 / NBRC 15305 / NCIMB 9373 / NCTC 2599 / NRRL B-3711).